Here is a 337-residue protein sequence, read N- to C-terminus: 1-aminocyclopropane-1-carboxylate deaminase (337 aa).

Position 50 is an N6-(pyridoxal phosphate)lysine (Lys-50). The Nucleophile role is filled by Ser-77.

Belongs to the ACC deaminase/D-cysteine desulfhydrase family. Homotrimer. Pyridoxal 5'-phosphate is required as a cofactor.

It carries out the reaction 1-aminocyclopropane-1-carboxylate + H2O = 2-oxobutanoate + NH4(+). Catalyzes a cyclopropane ring-opening reaction, the irreversible conversion of 1-aminocyclopropane-1-carboxylate (ACC) to ammonia and alpha-ketobutyrate. Allows growth on ACC as a nitrogen source. The sequence is that of 1-aminocyclopropane-1-carboxylate deaminase from Rhizobium rhizogenes (strain K84 / ATCC BAA-868) (Agrobacterium radiobacter).